The following is a 424-amino-acid chain: L-glutamine:2-deoxy-scyllo-inosose aminotransferase (424 aa).

N6-(pyridoxal phosphate)lysine is present on lysine 202.

The protein belongs to the DegT/DnrJ/EryC1 family. L-glutamine:2-deoxy-scyllo-inosose/scyllo-inosose aminotransferase subfamily. Requires pyridoxal 5'-phosphate as cofactor.

The catalysed reaction is 2-deoxy-L-scyllo-inosose + L-glutamine = 2-deoxy-scyllo-inosamine + 2-oxoglutaramate. It catalyses the reaction 3-amino-2,3-dideoxy-scyllo-inosose + L-glutamine = 2-deoxystreptamine + 2-oxoglutaramate. Its pathway is metabolic intermediate biosynthesis; 2-deoxystreptamine biosynthesis; 2-deoxystreptamine from D-glucose 6-phosphate: step 2/4. It functions in the pathway metabolic intermediate biosynthesis; 2-deoxystreptamine biosynthesis; 2-deoxystreptamine from D-glucose 6-phosphate: step 4/4. It participates in antibiotic biosynthesis; neomycin biosynthesis. Its function is as follows. Catalyzes the PLP-dependent transamination of 2-deoxy-scyllo-inosose (2-DOI) to form 2-deoxy-scyllo-inosamine (2-DOIA) using L-glutamine as the amino donor. Also catalyzes the transamination of 3-amino-2,3-dideoxy-scyllo-inosose (keto-2-DOIA) into 2-deoxystreptamine (2-DOS). This Streptomyces fradiae (Streptomyces roseoflavus) protein is L-glutamine:2-deoxy-scyllo-inosose aminotransferase (neoB).